The chain runs to 185 residues: NADH-quinone oxidoreductase subunit B (185 aa).

[4Fe-4S] cluster contacts are provided by Cys64, Cys65, Cys129, and Cys159.

Belongs to the complex I 20 kDa subunit family. NDH-1 is composed of 14 different subunits. Subunits NuoB, C, D, E, F, and G constitute the peripheral sector of the complex. Requires [4Fe-4S] cluster as cofactor.

The protein localises to the cell inner membrane. It carries out the reaction a quinone + NADH + 5 H(+)(in) = a quinol + NAD(+) + 4 H(+)(out). Its function is as follows. NDH-1 shuttles electrons from NADH, via FMN and iron-sulfur (Fe-S) centers, to quinones in the respiratory chain. Couples the redox reaction to proton translocation (for every two electrons transferred, four hydrogen ions are translocated across the cytoplasmic membrane), and thus conserves the redox energy in a proton gradient. The chain is NADH-quinone oxidoreductase subunit B from Rhodospirillum rubrum (strain ATCC 11170 / ATH 1.1.1 / DSM 467 / LMG 4362 / NCIMB 8255 / S1).